Consider the following 343-residue polypeptide: Vancomycin C-type resistance protein VanC1 (343 aa).

Positions 134–336 constitute an ATP-grasp domain; sequence HQLADTMGIA…YEILVEQLIA (203 aa). 164-219 contacts ATP; sequence IQDHGFPIFIKPNEAGSSKGITKVTDKTALQSALTTAFAYGSTVLIQKAIAGIEIG. Positions 290, 303, and 305 each coordinate Mg(2+). 3 residues coordinate Mn(2+): Asp290, Glu303, and Asn305.

Belongs to the D-alanine--D-alanine ligase family. Mg(2+) serves as cofactor. It depends on Mn(2+) as a cofactor.

The protein resides in the cell membrane. It carries out the reaction D-serine + D-alanine + ATP = D-alanyl-D-serine + ADP + phosphate + H(+). In terms of biological role, D-alanine--D-alanine ligase of altered specificity, which catalyzes synthesis of D-Ala-D-Ser; produces a peptidoglycan which does not terminate in D-alanine but in D-serine, thus probably reducing affinity for vancomycin. Together with VanT and VanXYC, required for vancomycin resistance in E.gallinarum strain BM4174. This chain is Vancomycin C-type resistance protein VanC1, found in Enterococcus gallinarum.